The chain runs to 175 residues: Large ribosomal subunit protein uL15 (175 aa).

2 disordered regions span residues 1-65 (MSTL…LPKF) and 155-175 (PESA…QPKA). Residues 12–21 (RSWHRKKRVG) are compositionally biased toward basic residues. A compositionally biased stretch (gly residues) spans 22 to 38 (RGQGSGLGKTAGRGGKG). The segment covering 160-169 (KAHAGKGVKA) has biased composition (low complexity).

Belongs to the universal ribosomal protein uL15 family. Part of the 50S ribosomal subunit.

Binds to the 23S rRNA. The polypeptide is Large ribosomal subunit protein uL15 (Myxococcus xanthus (strain DK1622)).